The following is a 778-amino-acid chain: Ent-trachylobane synthase KSL2, chloroplastic (778 aa).

Residues 1 to 37 (MLLTCTNSLKISSQAKEWESKTLTGMSLEQLNKRIRI) constitute a chloroplast transit peptide. Mg(2+) is bound by residues D529, D533, N672, D673, and D680. A DDXXD motif motif is present at residues 529–533 (DDFFD).

Belongs to the terpene synthase family. Mg(2+) is required as a cofactor.

The protein resides in the plastid. The protein localises to the chloroplast. It catalyses the reaction ent-copalyl diphosphate = ent-trachylobane + diphosphate. It carries out the reaction ent-copalyl diphosphate = ent-kaur-16-ene + diphosphate. It participates in secondary metabolite biosynthesis; terpenoid biosynthesis. Diterpene cyclase involved in the biosynthesis of labdane-related diterpenoids (LRDs) natural products. Catalyzes the cyclization of ent-CDP into ent-trachylobane as a major and ent-kaurene as a minor product. This Ricinus communis (Castor bean) protein is Ent-trachylobane synthase KSL2, chloroplastic.